A 219-amino-acid polypeptide reads, in one-letter code: Adenylate kinase (219 aa).

An ATP-binding site is contributed by 10-15 (GAGKGT). An NMP region spans residues 30 to 59 (STGDMLRAAVKAGTPLGQQAKKVMDAGELV). AMP contacts are provided by residues T31, R36, 57 to 59 (ELV), 85 to 88 (GFPR), and Q92. Positions 122 to 159 (GRRVHPGSGRVYHVEHNPPKEEGKDDVTGEPLVQRDDD) are LID. Residues R123 and 132–133 (VY) each bind ATP. The segment at 129–152 (SGRVYHVEHNPPKEEGKDDVTGEP) is disordered. Over residues 133–152 (YHVEHNPPKEEGKDDVTGEP) the composition is skewed to basic and acidic residues. Residues R156 and R167 each coordinate AMP. G203 serves as a coordination point for ATP.

This sequence belongs to the adenylate kinase family. As to quaternary structure, monomer.

Its subcellular location is the cytoplasm. It carries out the reaction AMP + ATP = 2 ADP. It participates in purine metabolism; AMP biosynthesis via salvage pathway; AMP from ADP: step 1/1. Catalyzes the reversible transfer of the terminal phosphate group between ATP and AMP. Plays an important role in cellular energy homeostasis and in adenine nucleotide metabolism. The protein is Adenylate kinase of Alkalilimnicola ehrlichii (strain ATCC BAA-1101 / DSM 17681 / MLHE-1).